Consider the following 1960-residue polypeptide: Intraflagellar transport protein 172 (1960 aa).

2 WD repeats span residues serine 63–lysine 103 and glycine 328–cysteine 367. 3 TPR repeats span residues lysine 1064 to arginine 1098, cysteine 1362 to valine 1395, and methionine 1397 to arginine 1428.

It belongs to the IFT172 family.

It localises to the cell projection. Its subcellular location is the cilium. The protein resides in the flagellum. It is found in the cytoplasm. The protein localises to the cytoskeleton. It localises to the flagellum axoneme. Its subcellular location is the flagellum basal body. Its function is as follows. Component of the intraflagellar transport complex B (IFT-B) involved in flagellar assembly. The sequence is that of Intraflagellar transport protein 172 from Giardia intestinalis (strain ATCC 50803 / WB clone C6) (Giardia lamblia).